We begin with the raw amino-acid sequence, 378 residues long: Putative glutamate--cysteine ligase 2 (378 aa).

This sequence belongs to the glutamate--cysteine ligase type 2 family. YbdK subfamily.

It catalyses the reaction L-cysteine + L-glutamate + ATP = gamma-L-glutamyl-L-cysteine + ADP + phosphate + H(+). Its function is as follows. ATP-dependent carboxylate-amine ligase which exhibits weak glutamate--cysteine ligase activity. The protein is Putative glutamate--cysteine ligase 2 of Pseudomonas paraeruginosa (strain DSM 24068 / PA7) (Pseudomonas aeruginosa (strain PA7)).